Here is a 437-residue protein sequence, read N- to C-terminus: Probable peptidoglycan-N-acetylglucosamine deacetylase ARB_03699 (437 aa).

Positions M1–A20 are cleaved as a signal peptide. Residues S47–P132 form a disordered region. N99 carries N-linked (GlcNAc...) asparagine glycosylation. Residues G149–V334 enclose the NodB homology domain. Catalysis depends on D156, which acts as the Proton acceptor. Positions 157, 209, and 213 each coordinate Zn(2+). Y251 provides a ligand contact to substrate. The active-site Proton donor is the H308. Over residues T350 to S370 the composition is skewed to low complexity. The disordered stretch occupies residues T350 to A384. Residues K389–V435 enclose the LysM domain.

It depends on Zn(2+) as a cofactor. Co(2+) serves as cofactor.

It localises to the secreted. The enzyme catalyses peptidoglycan-N-acetyl-D-glucosamine + H2O = peptidoglycan-D-glucosamine + acetate.. Its function is as follows. Catalyzes the deacetylation of N-acetylglucosamine (GlcNAc) residues in peptidoglycan. The sequence is that of Probable peptidoglycan-N-acetylglucosamine deacetylase ARB_03699 from Arthroderma benhamiae (strain ATCC MYA-4681 / CBS 112371) (Trichophyton mentagrophytes).